A 128-amino-acid polypeptide reads, in one-letter code: Small ribosomal subunit protein uS14m (128 aa).

It belongs to the universal ribosomal protein uS14 family. Component of the mitochondrial small ribosomal subunit (mt-SSU). Mature mammalian 55S mitochondrial ribosomes consist of a small (28S) and a large (39S) subunit. The 28S small subunit contains a 12S ribosomal RNA (12S mt-rRNA) and 30 different proteins. The 39S large subunit contains a 16S rRNA (16S mt-rRNA), a copy of mitochondrial valine transfer RNA (mt-tRNA(Val)), which plays an integral structural role, and 52 different proteins. Interacts with LIAT1.

It localises to the mitochondrion. In Homo sapiens (Human), this protein is Small ribosomal subunit protein uS14m.